Reading from the N-terminus, the 2063-residue chain is MVLDDLPNLEDIYTSLCSSTMEDSEMDFDSGLEDDDTKSDSILEDSTIFVAFKGNIDDKDFKWKLDAILKNVPNLLHMESSKLKVQKVEPWNSVRVTFNIPREAAERLRILAQSNNQQLRDLGILSVQIEGEGAINLALAQNRSQDVRMNGPMGAGNSVRMEAGFPMASGPGIIRMNNPATVMIPPGGNVSSSMMAPGPNPELQPRTPRPASQSDAMDPLLSGLHIQQQSHPSGSLAPPHHPMQPVSVNRQMNPANFPQLQQQQQQQQQQQQQQQQQQQQQQQQQLQARPPQQHQQQQPQGIRPQFTAPTQVPVPPGWNQLPSGALQPPPAQGSLGTMTANQGWKKAPLPGPMQQQLQARPSLATVQTPSHPPPPYPFGSQQASQAHTNFPQMSNPGQFTAPQMKSLQGGPSRVPTPLQQPHLTNKSPASSPSSFQQGSPASSPTVNQTQQQMGPRPPQNNPLPQGFQQPVSSPGRNPMVQQGNVPPNFMVMQQQPPNQGPQSLHPGLGGMPKRLPPGFSAGQANPNFMQGQVPSTTATTPGNSGAPQLQANQNVQHAGGQGAGPPQNQMQVSHGPPNMMQPSLMGIHGNMNNQQAGTSGVPQVNLSNMQGQPQQGPPSQLMGMHQQIVPSQGQMVQQQGTLNPQNPMILSRAQLMPQGQMMVNPPSQNLGPSPQRMTPPKQMLSQQGPQMMAPHNQMMGPQGQVLLQQNPMIEQIMTNQMQGNKQQFNTQNQSNVMPGPAQIMRGPTPNMQGNMVQFTGQMSGQMLPQQGPVNNSPSQVMGIQGQVLRPPGPSPHMAQQHGDPATTANNDVSLSQMMPDVSIQQTNMVPPHVQAMQGNSASGNHFSGHGMSFNAPFSGAPNGNQMSCGQNPGFPVNKDVTLTSPLLVNLLQSDISAGHFGVNNKQNNTNANKPKKKKPPRKKKNSQQDLNTPDTRPAGLEEADQPPLPGEQGINLDNSGPKLPEFSNRPPGYPSQPVEQRPLQQMPPQLMQHVAPPPQPPQQQPQPQLPQQQQPPPPSQPQSQQQQQQQQQMMMMLMMQQDPKSVRLPVSQNVHPPRGPLNPDSQRMPMQQSGSVPVMVSLQGPASVPPSPDKQRMPMPVNTPLGSNSRKMVYQESPQNPSSSPLAEMASLPEASGSEAPSVPGGPNNMPSHVVLPQNQLMMTGPKPGPSPLSATQGATPQQPPVNSLPSSHGHHFPNVAAPTQTSRPKTPNRASPRPYYPQTPNNRPPSTEPSEISLSPERLNASIAGLFPPQINIPLPPRPNLNRGFDQQGLNPTTLKAIGQAPSNLTMNPSNFATPQTHKLDSVVVNSGKQSNSGATKRASPSNSRRSSPGSSRKTTPSPGRQNSKAPKLTLASQTNAALLQNVELPRNVLVSPTPLANPPVPGSFPNNSGLNPQNSTVSVAAVGGVVEDNKESLNVPQDSDCQNSQSRKEQVNIELKAVPAQEVKMVVPEDQSKKDGQPSDPNKLPSVEENKNLVSPAMREAPTSLSQLLDNSGAPNVTIKPPGLTDLEVTPPVVSGEDLKKASVIPTLQDLSSSKEPSNSLNLPHSNELCSSLVHPELSEVSSNVAPSIPPVMSRPVSSSSISTPLPPNQITVFVTSNPITTSANTSAALPTHLQSALMSTVVTMPNAGSKVMVSEGQSAAQSNARPQFITPVFINSSSIIQVMKGSQPSTIPAAPLTTNSGLMPPSVAVVGPLHIPQNIKFSSAPVPPNALSSSPAPNIQTGRPLVLSSRATPVQLPSPPCTSSPVVPSHPPVQQVKELNPDEASPQVNTSADQNTLPSSQSTTMVSPLLTNSPGSSGNRRSPVSSSKGKGKVDKIGQILLTKACKKVTGSLEKGEEQYGADGETEGQGLDTTAPGLMGTEQLSTELDSKTPTPPAPTLLKMTSSPVGPGTASAGPSLPGGALPTSVRSIVTTLVPSELISAVPTTKSNHGGIASESLAGGLVEEKVGSHPELLPSIAPSQNLVSKETSTTALQASVARPELEVNAAIVSGQSSEPKEIVEKSKIPGRRNSRTEEPTVASESVENGHRKRSSRPASASSSTKDITSAVQSKRRKSK.

Positions 1 to 928 are TBP/GTF2A-binding region; the sequence is MVLDDLPNLE…PPRKKKNSQQ (928 aa). The segment at 1–1057 is CREBBP-binding region; sequence MVLDDLPNLE…LPVSQNVHPP (1057 aa). An NCOA1-binding region region spans residues 1 to 1310; sequence MVLDDLPNLE…QTHKLDSVVV (1310 aa). Arg95 is modified (asymmetric dimethylarginine). 3 disordered regions span residues 184–251, 281–549, and 789–811; these read IPPG…VNRQ, QQQQ…APQL, and RPPG…ANND. Over residues 281 to 300 the composition is skewed to low complexity; sequence QQQQQLQARPPQQHQQQQPQ. Polar residues-rich tracts occupy residues 353–368, 379–406, 417–453, 462–502, and 522–549; these read MQQQ…TVQT, GSQQ…QMKS, PLQQ…QQQM, PLPQ…QGPQ, and GQAN…APQL. Positions 773-927 are NCOA6IP-binding region; that stretch reads VNNSPSQVMG…KPPRKKKNSQ (155 aa). A Phosphoserine; by MAPK; in vitro modification is found at Ser884. The LXXLL motif 1 signature appears at 887–891; that stretch reads LVNLL. Disordered stretches follow at residues 899–1278, 1310–1353, and 1448–1474; these read HFGV…LNPT, VNSG…KAPK, and EVKM…PSVE. The span at 903–912 shows a compositional bias: low complexity; the sequence is NNKQNNTNAN. A compositionally biased stretch (basic residues) spans 913–925; it reads KPKKKKPPRKKKN. Low complexity predominate over residues 982 to 992; sequence PLQQMPPQLMQ. The span at 995–1020 shows a compositional bias: pro residues; sequence APPPQPPQQQPQPQLPQQQQPPPPSQ. Residues 1021 to 1041 are compositionally biased toward low complexity; it reads PQSQQQQQQQQQMMMMLMMQQ. Arg1047 and Arg1058 each carry asymmetric dimethylarginine. Residues 1063–1075 show a composition bias toward polar residues; that stretch reads PDSQRMPMQQSGS. Residue Arg1096 is modified to Asymmetric dimethylarginine. 3 stretches are compositionally biased toward polar residues: residues 1104–1125, 1173–1191, and 1202–1214; these read PLGS…SSSP, LSAT…SLPS, and APTQ…TPNR. Pro residues predominate over residues 1219 to 1232; it reads PYYPQTPNNRPPST. Residues 1310-1320 show a composition bias toward polar residues; that stretch reads VNSGKQSNSGA. Residues 1322–1345 show a composition bias toward low complexity; sequence KRASPSNSRRSSPGSSRKTTPSPG. Residues 1491 to 1495 carry the LXXLL motif 2 motif; that stretch reads LSQLL. The segment at 1641 to 2063 is EP300/CRSP3-binding region; it reads SEGQSAAQSN…AVQSKRRKSK (423 aa). The segment at 1738–1820 is disordered; the sequence is ATPVQLPSPP…VSSSKGKGKV (83 aa). The segment covering 1750–1763 has biased composition (low complexity); it reads SSPVVPSHPPVQQV. Residues 1773–1798 show a composition bias toward polar residues; that stretch reads PQVNTSADQNTLPSSQSTTMVSPLLT. Residues 1799–1815 show a composition bias toward low complexity; it reads NSPGSSGNRRSPVSSSK. An N6-acetyllysine mark is found at Lys1819 and Lys1822. 2 disordered regions span residues 1837 to 1908 and 1995 to 2063; these read GSLE…LPGG and IVSG…RKSK. The span at 2002–2011 shows a compositional bias: basic and acidic residues; that stretch reads EPKEIVEKSK. A Phosphoserine modification is found at Ser2018.

In terms of assembly, monomer and homodimer. Interacts with RBM39. Interacts in vitro with the basal transcription factors GTF2A and TBP, suggesting an autonomous transactivation function. Interacts with NCOA1, CRSP3, RBM14, the histone acetyltransferases EP300 and CREBBP, and with the methyltransferases NCOA6IP and PRMT2/HRMT1L1. Component of the MLL2/3 complex (also named ASCOM complex), at least composed of KMT2D/MLL2 or KMT2C/MLL3, ASH2L, RBBP5, WDR5, NCOA6, DPY30, KDM6A, PAXIP1/PTIP, PAGR1 and alpha- and beta-tubulin. Interacts with ZNF335; may enhance ligand-dependent transcriptional activation by nuclear hormone receptors. Phosphorylated by PRKDC. In terms of processing, phosphorylation on Ser-884 leads to a strong decrease in binding to ESR1 and ESR2. As to expression, ubiquitous. Highly expressed in brain, prostate, testis and ovary; weakly expressed in lung, thymus and small intestine.

It is found in the nucleus. Its function is as follows. Nuclear receptor coactivator that directly binds nuclear receptors and stimulates the transcriptional activities in a hormone-dependent fashion. Coactivates expression in an agonist- and AF2-dependent manner. Involved in the coactivation of different nuclear receptors, such as for steroids (GR and ERs), retinoids (RARs and RXRs), thyroid hormone (TRs), vitamin D3 (VDR) and prostanoids (PPARs). Probably functions as a general coactivator, rather than just a nuclear receptor coactivator. May also be involved in the coactivation of the NF-kappa-B pathway. May coactivate expression via a remodeling of chromatin and its interaction with histone acetyltransferase proteins. The protein is Nuclear receptor coactivator 6 (NCOA6) of Homo sapiens (Human).